Reading from the N-terminus, the 508-residue chain is MNLDFSQCFGDKGDIENITEADIISTVEFDHTGDFLATGDKGGRVVLFERNQSKKKQSCEYKFFTEFQSHDAEFDYLKSLEIEEKINKIKWLKSANDSLCLLSTNDKTIKLWKIQERQIKLVSENNLNGLNHLPSSNIGIESLKLPQLQLHDKLISAQPKKIYANAHAYHINSISVNSDQETYLSADDLRINLWNLGIADQSFNIVDIKPANMEELTEVITSAEFHPLQCNLFMYSSSKGTIKLSDMRSNSLCDSHAKIFEEYLDPSSHNFFTEITSSISDVKFSHDGRYIASRDYMTVKIWDLAMENKPIKTIDVHEHLRERLCDTYENDAIFDKFEVQFGGDNKSVMTGSYNNQFVIYPNAVNTGNDDKPKFKSAFKNSSKRSKKNGFSTRTTDDDDDDDDDDDDEEADDEFDEEVPATKNSPGSQLEDDDEQEEIILQADKSAFKSKKSGQHPMRRRMTSGVGSNLGREFDDVDFKKSILHLSWHPRENSVAIAATNNLYIFSTL.

WD repeat units follow at residues 19-58 (TEAD…KKQS), 81-122 (EIEE…IKLV), 166-204 (AHAY…QSFN), 215-255 (ELTE…LCDS), 274-312 (EITS…KPIK), and 329-370 (ENDA…GNDD). Residues 369–466 (DDKPKFKSAF…MRRRMTSGVG (98 aa)) are disordered. The segment covering 396–418 (DDDDDDDDDDDDEEADDEFDEEV) has biased composition (acidic residues). Residues 447 to 461 (FKSKKSGQHPMRRRM) show a composition bias toward basic residues. The stretch at 477 to 507 (DFKKSILHLSWHPRENSVAIAATNNLYIFST) is one WD 7 repeat.

The protein belongs to the phosphatase 2A regulatory subunit B family. In terms of assembly, PP2A exists in several trimeric forms, all of which consist of a core composed of a catalytic subunit associated with a 65 kDa (PR65) (Subunit A) and a 55 kDa (PR55) (Subunit B) regulatory subunit.

Phosphatase 2A affects a variety of biological processes in the cell such as transcription, cell cycle progression and cellular morphogenesis, and provides an initial identification of critical substrates for this phosphatase. The regulatory subunit may direct the catalytic subunit to distinct, albeit overlapping, subsets of substrates. The chain is Protein phosphatase PP2A regulatory subunit B (CDC55) from Candida tropicalis (Yeast).